Reading from the N-terminus, the 137-residue chain is MATGTFDIIHPGHITFLREAKKLGDELIVIVAREKNVRHKPKPVVPEEQRRRVVEAIKYVDKAILGDEDDMFRPIMELKPDVIVLGHDQHFDEDWLKEELRKRNLNCEVVRIRVKEDCPLCSSHKIIERILEKYGGR.

Residues threonine 5–phenylalanine 6, histidine 10–histidine 13, and aspartate 88 contribute to the ATP site.

This sequence belongs to the archaeal FAD synthase family. Homodimer. A divalent metal cation is required as a cofactor.

It carries out the reaction FMN + ATP + H(+) = FAD + diphosphate. It participates in cofactor biosynthesis; FAD biosynthesis; FAD from FMN: step 1/1. Catalyzes the transfer of the AMP portion of ATP to flavin mononucleotide (FMN) to produce flavin adenine dinucleotide (FAD) coenzyme. This Archaeoglobus fulgidus (strain ATCC 49558 / DSM 4304 / JCM 9628 / NBRC 100126 / VC-16) protein is FAD synthase.